Consider the following 299-residue polypeptide: Recombination-associated protein RdgC (299 aa).

It belongs to the RdgC family.

It is found in the cytoplasm. The protein localises to the nucleoid. Its function is as follows. May be involved in recombination. The polypeptide is Recombination-associated protein RdgC (Neisseria meningitidis serogroup C (strain 053442)).